A 268-amino-acid polypeptide reads, in one-letter code: Protein MGF 300-1L (268 aa).

Residues 1–175 (MVSLTTCCLK…QTFKIFYAKN (175 aa)) are Cytoplasmic-facing. A helical transmembrane segment spans residues 176–193 (YSLSTLYCIFLAIYYKRY). Topologically, residues 194–268 (TALRKMVKIY…MYAFSQNNFW (75 aa)) are extracellular.

This sequence belongs to the asfivirus MGF 300 family.

The protein localises to the host membrane. Its function is as follows. Plays a role in virus cell tropism, and may be required for efficient virus replication in macrophages. This is Protein MGF 300-1L from African swine fever virus (isolate Tick/South Africa/Pretoriuskop Pr4/1996) (ASFV).